The chain runs to 580 residues: MVEFKFEVKARDAAGRIGKLEVNGKKIETPAIMPVINPKQLTVTPKELKEMGFGIIITNSYIIYKTPELREKALEVGIHRLLDYDGIIEVDSGSFQLMRYGGVDVTNREIVEFQERIGVDIGTFLDIPTPPDAPREKAEEDLRITLERAKEAEEIKGIAMNAAVQGSTYPDLRTYAARKLSEMNFEIHPIGAVVPLMESYRYRDLVDVVIASKQGLRSDRPVHLFGAGHPMIFALAVAMGIDLFDSASYALYAKDDRYLTPEGTKHLSELEYFPCSCPVCSRYTPRELREMPKEERTRLLALHNLWVIREELNRVKQAIKEGELWRLVDERARSHPKLYAAYKRLLEYQDYLEKNEPITKASAFFKVSEESLKWPIVQRAKARAERVKAKFPETINHPIFGEIPKYLSLSYPFAQSEGEEDFTIEKPGKREVRNYVMAVAEYQFGEGTREAFKDAFVELSRKTGMPRQIKAKGKHLATFRAEDGLLTLGIEGAKRLHEILPFPRMRVVVDEDAEPFARKGKNVFAKFVIDADENIRPYDEVLIVNRNDELLATGQTLLNGRELKLFQSGLAVKVRRGVEK.

The Nucleophile role is filled by Asp91. Residues Asp126 and Ala192 each coordinate substrate. 3 residues coordinate Zn(2+): Cys275, Cys277, and Cys280. The region spanning 504 to 579 (RMRVVVDEDA…LAVKVRRGVE (76 aa)) is the PUA domain.

The protein belongs to the archaeosine tRNA-ribosyltransferase family. Zn(2+) is required as a cofactor.

The enzyme catalyses guanosine(15) in tRNA + 7-cyano-7-deazaguanine = 7-cyano-7-carbaguanosine(15) in tRNA + guanine. Its pathway is tRNA modification; archaeosine-tRNA biosynthesis. Exchanges the guanine residue with 7-cyano-7-deazaguanine (preQ0) at position 15 in the dihydrouridine loop (D-loop) of archaeal tRNAs. This chain is tRNA-guanine(15) transglycosylase, found in Thermococcus onnurineus (strain NA1).